A 161-amino-acid chain; its full sequence is Negative cofactor 2 complex subunit beta (161 aa).

The Histone-fold domain maps to 11–75 (SLPKATVQKM…IAAEHIIKAL (65 aa)). The span at 93–107 (EHKEQQKNREKKSSK) shows a compositional bias: basic and acidic residues. 2 disordered regions span residues 93–116 (EHKE…VSRD) and 130–161 (RERF…TKEN). Residues 135–147 (NQNIAHDNHTTTA) show a composition bias toward polar residues.

This sequence belongs to the NC2 beta/DR1 family.

The protein localises to the cytoplasm. It is found in the nucleus. The chain is Negative cofactor 2 complex subunit beta (ncb2) from Schizosaccharomyces pombe (strain 972 / ATCC 24843) (Fission yeast).